We begin with the raw amino-acid sequence, 127 residues long: Fluoride-specific ion channel FluC (127 aa).

A run of 4 helical transmembrane segments spans residues 4–24, 38–58, 71–91, and 104–124; these read FSIL…RYLV, YGTL…IAAF, VIGL…MDNV, and LNIL…FQLL. G78 and T81 together coordinate Na(+).

Belongs to the fluoride channel Fluc/FEX (TC 1.A.43) family.

The protein resides in the cell inner membrane. It catalyses the reaction fluoride(in) = fluoride(out). Na(+) is not transported, but it plays an essential structural role and its presence is essential for fluoride channel function. Its function is as follows. Fluoride-specific ion channel. Important for reducing fluoride concentration in the cell, thus reducing its toxicity. The chain is Fluoride-specific ion channel FluC from Vibrio parahaemolyticus serotype O3:K6 (strain RIMD 2210633).